A 406-amino-acid polypeptide reads, in one-letter code: 4-hydroxy-3-methylbut-2-en-1-yl diphosphate synthase (ferredoxin) (406 aa).

Residues Cys-315, Cys-318, Cys-349, and Glu-356 each coordinate [4Fe-4S] cluster.

It belongs to the IspG family. It depends on [4Fe-4S] cluster as a cofactor.

The catalysed reaction is (2E)-4-hydroxy-3-methylbut-2-enyl diphosphate + 2 oxidized [2Fe-2S]-[ferredoxin] + H2O = 2-C-methyl-D-erythritol 2,4-cyclic diphosphate + 2 reduced [2Fe-2S]-[ferredoxin] + H(+). It participates in isoprenoid biosynthesis; isopentenyl diphosphate biosynthesis via DXP pathway; isopentenyl diphosphate from 1-deoxy-D-xylulose 5-phosphate: step 5/6. Functionally, converts 2C-methyl-D-erythritol 2,4-cyclodiphosphate (ME-2,4cPP) into 1-hydroxy-2-methyl-2-(E)-butenyl 4-diphosphate. This is 4-hydroxy-3-methylbut-2-en-1-yl diphosphate synthase (ferredoxin) from Rippkaea orientalis (strain PCC 8801 / RF-1) (Cyanothece sp. (strain PCC 8801)).